The following is a 488-amino-acid chain: HSPB1-associated protein 1 (488 aa).

The tract at residues 88 to 208 (ETTCNYVEAT…EDTPFLYPTR (121 aa)) is interaction with HSPB1. In terms of domain architecture, JmjC spans 124-288 (WAYADYKYFV…HLARVEEAIT (165 aa)). Residues 369-379 (QTGSQNLTTGT) are compositionally biased toward polar residues. The interval 369-415 (QTGSQNLTTGTDKPEAASPFGPDLVPVAQRSEEPPSERGGIFGSDGK) is disordered.

As to quaternary structure, interacts with CRYAB and HSPB1. As to expression, widely expressed.

The protein localises to the cytoplasm. Functionally, may play a role in cellular stress response. This Homo sapiens (Human) protein is HSPB1-associated protein 1 (HSPBAP1).